The primary structure comprises 165 residues: Endoribonuclease YbeY (165 aa).

Residues histidine 130, histidine 134, and histidine 140 each contribute to the Zn(2+) site.

This sequence belongs to the endoribonuclease YbeY family. Zn(2+) serves as cofactor.

It is found in the cytoplasm. Functionally, single strand-specific metallo-endoribonuclease involved in late-stage 70S ribosome quality control and in maturation of the 3' terminus of the 16S rRNA. The protein is Endoribonuclease YbeY of Streptococcus agalactiae serotype Ia (strain ATCC 27591 / A909 / CDC SS700).